Consider the following 259-residue polypeptide: Ribonuclease PH (259 aa).

Phosphate contacts are provided by residues R88 and 126-128 (GTR).

This sequence belongs to the RNase PH family. As to quaternary structure, homohexameric ring arranged as a trimer of dimers.

The enzyme catalyses tRNA(n+1) + phosphate = tRNA(n) + a ribonucleoside 5'-diphosphate. Functionally, phosphorolytic 3'-5' exoribonuclease that plays an important role in tRNA 3'-end maturation. Removes nucleotide residues following the 3'-CCA terminus of tRNAs; can also add nucleotides to the ends of RNA molecules by using nucleoside diphosphates as substrates, but this may not be physiologically important. Probably plays a role in initiation of 16S rRNA degradation (leading to ribosome degradation) during starvation. The sequence is that of Ribonuclease PH from Mycobacterium avium (strain 104).